We begin with the raw amino-acid sequence, 205 residues long: Isochorismatase domain-containing protein 2 (205 aa).

Belongs to the isochorismatase family. In terms of assembly, interacts with CDKN2A.

It is found in the cytoplasm. The protein resides in the nucleus. This chain is Isochorismatase domain-containing protein 2 (ISOC2), found in Macaca fascicularis (Crab-eating macaque).